Consider the following 255-residue polypeptide: UDP-2,3-diacylglucosamine hydrolase (255 aa).

Residues D8, H10, D41, N79, and H114 each coordinate Mn(2+). Residue 79-80 (NR) coordinates substrate. Substrate-binding residues include D122, S160, N164, K167, and H195. Residues H195 and H197 each contribute to the Mn(2+) site.

This sequence belongs to the LpxH family. Mn(2+) is required as a cofactor.

The protein resides in the cell inner membrane. The catalysed reaction is UDP-2-N,3-O-bis[(3R)-3-hydroxytetradecanoyl]-alpha-D-glucosamine + H2O = 2-N,3-O-bis[(3R)-3-hydroxytetradecanoyl]-alpha-D-glucosaminyl 1-phosphate + UMP + 2 H(+). Its pathway is glycolipid biosynthesis; lipid IV(A) biosynthesis; lipid IV(A) from (3R)-3-hydroxytetradecanoyl-[acyl-carrier-protein] and UDP-N-acetyl-alpha-D-glucosamine: step 4/6. Functionally, hydrolyzes the pyrophosphate bond of UDP-2,3-diacylglucosamine to yield 2,3-diacylglucosamine 1-phosphate (lipid X) and UMP by catalyzing the attack of water at the alpha-P atom. Involved in the biosynthesis of lipid A, a phosphorylated glycolipid that anchors the lipopolysaccharide to the outer membrane of the cell. The polypeptide is UDP-2,3-diacylglucosamine hydrolase (Hamiltonella defensa subsp. Acyrthosiphon pisum (strain 5AT)).